The sequence spans 582 residues: Two-component response regulator ORR26 (582 aa).

In terms of domain architecture, Response regulatory spans 11–126 (RVLVVDDDPT…ELRNIWQHVY (116 aa)). Aspartate 62 bears the 4-aspartylphosphate mark. The span at 166-182 (SDTMRKRKDVDKDHADQ) shows a compositional bias: basic and acidic residues. The tract at residues 166-187 (SDTMRKRKDVDKDHADQESSDG) is disordered. Residues 189–248 (TVKKARVVWSVDLHQKFVNAVNQIGFDKVGPKKILDLMNVPGLTRENVASHLQKYRLYLS) constitute a DNA-binding region (myb-like GARP).

The protein belongs to the ARR family. Type-B subfamily. Two-component system major event consists of a His-to-Asp phosphorelay between a sensor histidine kinase (HK) and a response regulator (RR). In plants, the His-to-Asp phosphorelay involves an additional intermediate named Histidine-containing phosphotransfer protein (HPt). This multistep phosphorelay consists of a His-Asp-His-Asp sequential transfer of a phosphate group between first a His and an Asp of the HK protein, followed by the transfer to a conserved His of the HPt protein and finally the transfer to an Asp in the receiver domain of the RR protein.

The protein resides in the nucleus. In terms of biological role, transcriptional activator that binds specific DNA sequence. Functions as a response regulator involved in His-to-Asp phosphorelay signal transduction system. Phosphorylation of the Asp residue in the receiver domain activates the ability of the protein to promote the transcription of target genes. May directly activate some type-A response regulators in response to cytokinins. This is Two-component response regulator ORR26 from Oryza sativa subsp. japonica (Rice).